Reading from the N-terminus, the 347-residue chain is Glycerol-1-phosphate dehydrogenase [NAD(P)+] (347 aa).

NAD(+)-binding positions include 94 to 98 and 116 to 119; these read GKVID and TAAS. Asp121 contacts substrate. An NAD(+)-binding site is contributed by Ser125. Residue Asp168 participates in substrate binding. Residues Asp168 and His248 each contribute to the Zn(2+) site. His252 lines the substrate pocket. His264 is a binding site for Zn(2+).

The protein belongs to the glycerol-1-phosphate dehydrogenase family. In terms of assembly, homooctamer. Zn(2+) serves as cofactor.

The protein localises to the cytoplasm. The enzyme catalyses sn-glycerol 1-phosphate + NAD(+) = dihydroxyacetone phosphate + NADH + H(+). It carries out the reaction sn-glycerol 1-phosphate + NADP(+) = dihydroxyacetone phosphate + NADPH + H(+). Its pathway is membrane lipid metabolism; glycerophospholipid metabolism. Partially inhibited by divalent metal cations such as Co(2+), Cu(2+) and Ni(2+). In terms of biological role, catalyzes the NAD(P)H-dependent reduction of dihydroxyacetonephosphate (DHAP or glycerone phosphate) to glycerol 1-phosphate (G1P). The G1P thus generated is used as the glycerophosphate backbone of phospholipids in the cellular membranes of Archaea. Is also able to catalyze the reverse reaction, i.e. the NAD(P)(+)-dependent oxidation of G1P but not of G3P. Is not active toward glycerol, dihydroxyacetone, glyceraldehyde-3-phosphate, glyceraldehyde and glycerol-2-phosphate. The chain is Glycerol-1-phosphate dehydrogenase [NAD(P)+] (egsA) from Methanothermobacter thermautotrophicus (strain ATCC 29096 / DSM 1053 / JCM 10044 / NBRC 100330 / Delta H) (Methanobacterium thermoautotrophicum).